The chain runs to 651 residues: Threonine--tRNA ligase (651 aa).

In terms of domain architecture, TGS spans 1–61; it reads MPTIQLPDGS…DKDVSLRIIT (61 aa). A catalytic region spans residues 242–533; it reads DHRLLAKKMD…LLEESAGKLP (292 aa). Zn(2+)-binding residues include C333, H384, and H510. A disordered region spans residues 631–651; the sequence is ISQRSRKSPAPSPLFPVGGES.

It belongs to the class-II aminoacyl-tRNA synthetase family. In terms of assembly, homodimer. Zn(2+) serves as cofactor.

Its subcellular location is the cytoplasm. It carries out the reaction tRNA(Thr) + L-threonine + ATP = L-threonyl-tRNA(Thr) + AMP + diphosphate + H(+). In terms of biological role, catalyzes the attachment of threonine to tRNA(Thr) in a two-step reaction: L-threonine is first activated by ATP to form Thr-AMP and then transferred to the acceptor end of tRNA(Thr). Also edits incorrectly charged L-seryl-tRNA(Thr). The sequence is that of Threonine--tRNA ligase from Coxiella burnetii (strain RSA 493 / Nine Mile phase I).